A 491-amino-acid polypeptide reads, in one-letter code: Glutamyl-tRNA(Gln) amidotransferase subunit A (491 aa).

Residues Lys-79 and Ser-154 each act as charge relay system in the active site. Ser-178 acts as the Acyl-ester intermediate in catalysis.

Belongs to the amidase family. GatA subfamily. As to quaternary structure, heterotrimer of A, B and C subunits.

The enzyme catalyses L-glutamyl-tRNA(Gln) + L-glutamine + ATP + H2O = L-glutaminyl-tRNA(Gln) + L-glutamate + ADP + phosphate + H(+). Allows the formation of correctly charged Gln-tRNA(Gln) through the transamidation of misacylated Glu-tRNA(Gln) in organisms which lack glutaminyl-tRNA synthetase. The reaction takes place in the presence of glutamine and ATP through an activated gamma-phospho-Glu-tRNA(Gln). In Synechococcus sp. (strain CC9902), this protein is Glutamyl-tRNA(Gln) amidotransferase subunit A.